Here is a 128-residue protein sequence, read N- to C-terminus: Ribonuclease P protein component (128 aa).

Belongs to the RnpA family. Consists of a catalytic RNA component (M1 or rnpB) and a protein subunit.

The catalysed reaction is Endonucleolytic cleavage of RNA, removing 5'-extranucleotides from tRNA precursor.. In terms of biological role, RNaseP catalyzes the removal of the 5'-leader sequence from pre-tRNA to produce the mature 5'-terminus. It can also cleave other RNA substrates such as 4.5S RNA. The protein component plays an auxiliary but essential role in vivo by binding to the 5'-leader sequence and broadening the substrate specificity of the ribozyme. The sequence is that of Ribonuclease P protein component from Prochlorococcus marinus (strain AS9601).